We begin with the raw amino-acid sequence, 111 residues long: uncharacterized protein (111 aa).

A run of 4 helical transmembrane segments spans residues 3 to 23 (WVLV…LKHA), 24 to 44 (DSLL…ILLI), 54 to 74 (AAYT…GIVL), and 80 to 100 (AAQM…KLFT).

It belongs to the drug/metabolite transporter (DMT) superfamily. Small multidrug resistance (SMR) (TC 2.A.7.1) family.

Its subcellular location is the cell membrane. This is an uncharacterized protein from Bacillus subtilis (strain 168).